Consider the following 329-residue polypeptide: Quinone-oxidoreductase homolog, chloroplastic (329 aa).

Belongs to the zinc-containing alcohol dehydrogenase family. Quinone oxidoreductase subfamily. Post-translationally, the transit peptide is not cleaved.

The protein resides in the plastid. Its subcellular location is the chloroplast inner membrane. This is Quinone-oxidoreductase homolog, chloroplastic (QOR) from Spinacia oleracea (Spinach).